Here is a 378-residue protein sequence, read N- to C-terminus: MANGNSFGVLFCVTTYGESHGGAVGVVVDGCPPRLPLSEADIQAELDRRRPGQSHITTPRQEADRCQILSGVFQGFTLGTPIHILVRNQDARPQDYSEMATTFRPSHADATYQAKYGIRNWQGGGRASARETIGRVAAGAIAKKILRLAAGVEILAYVQRVQDVEAQVDPSSVTAEQVEANIVRCPDPAAAAAMIEKIEAAAREGDSLGGVVECVARNVPRGLGCPVFDKLEADLAKAVMSLPASKGFEIGSGFAGTYLTGKQHNDEFYMTPSGWRTRSNRSGGIQGGISNGEDIVLRVAFKPTATIRQPQSTVTLDGQETVLAARGRHDPCVLPRAVPMVEAMVALVLCDHLLRHHAQCRSLALPEVPIPAVPLPHS.

Arginine 49 is an NADP(+) binding site. FMN contacts are provided by residues 126–128 (RAS), glycine 287, 302–306 (KPTAT), and arginine 328.

The protein belongs to the chorismate synthase family. Homotetramer. The cofactor is FMNH2.

It catalyses the reaction 5-O-(1-carboxyvinyl)-3-phosphoshikimate = chorismate + phosphate. It participates in metabolic intermediate biosynthesis; chorismate biosynthesis; chorismate from D-erythrose 4-phosphate and phosphoenolpyruvate: step 7/7. Its function is as follows. Catalyzes the anti-1,4-elimination of the C-3 phosphate and the C-6 proR hydrogen from 5-enolpyruvylshikimate-3-phosphate (EPSP) to yield chorismate, which is the branch point compound that serves as the starting substrate for the three terminal pathways of aromatic amino acid biosynthesis. This reaction introduces a second double bond into the aromatic ring system. This chain is Chorismate synthase, found in Synechococcus sp. (strain JA-3-3Ab) (Cyanobacteria bacterium Yellowstone A-Prime).